The primary structure comprises 116 residues: Small ribosomal subunit protein uS13 (116 aa).

The interval 88-116 (GSRHKKGLPVRGQHTKNNARTRKGPRKQA) is disordered.

This sequence belongs to the universal ribosomal protein uS13 family. As to quaternary structure, part of the 30S ribosomal subunit. Forms a loose heterodimer with protein S19. Forms two bridges to the 50S subunit in the 70S ribosome.

In terms of biological role, located at the top of the head of the 30S subunit, it contacts several helices of the 16S rRNA. In the 70S ribosome it contacts the 23S rRNA (bridge B1a) and protein L5 of the 50S subunit (bridge B1b), connecting the 2 subunits; these bridges are implicated in subunit movement. Contacts the tRNAs in the A and P-sites. This chain is Small ribosomal subunit protein uS13, found in Finegoldia magna (strain ATCC 29328 / DSM 20472 / WAL 2508) (Peptostreptococcus magnus).